We begin with the raw amino-acid sequence, 132 residues long: Ribonuclease P protein component 2 (132 aa).

The protein belongs to the eukaryotic/archaeal RNase P protein component 2 family. As to quaternary structure, consists of a catalytic RNA component and at least 4-5 protein subunits.

Its subcellular location is the cytoplasm. The catalysed reaction is Endonucleolytic cleavage of RNA, removing 5'-extranucleotides from tRNA precursor.. Part of ribonuclease P, a protein complex that generates mature tRNA molecules by cleaving their 5'-ends. The chain is Ribonuclease P protein component 2 from Methanosarcina acetivorans (strain ATCC 35395 / DSM 2834 / JCM 12185 / C2A).